The chain runs to 480 residues: Heparin cofactor 2 (480 aa).

An N-terminal signal peptide occupies residues 1–19; the sequence is MQHRPHLLLISLTIMSVCG. N-linked (GlcNAc...) asparagine glycosylation is present at Asn-32. 2 repeat units span residues 56–66 and 70–80. The 2 X 11 AA approximate repeats, Asp/Glu-rich (acidic) (hirudin-like) stretch occupies residues 56-80; the sequence is GEEDDDYLDLEKLLSEDDDYIDIID. Tyr-62 and Tyr-75 each carry sulfotyrosine. N-linked (GlcNAc...) asparagine glycosylation occurs at Asn-169. The tract at residues 173 to 193 is glycosaminoglycan-binding site; sequence KYEILTIHNLFRKLTHRLFRR. Residues Asn-368 and Asn-404 are each glycosylated (N-linked (GlcNAc...) asparagine).

The protein belongs to the serpin family. N-glycosylated; different glycan composition appears to lead to two forms of this protein (56 and 60 kDa).

Its function is as follows. Thrombin inhibitor activated by the glycosaminoglycans, heparin or dermatan sulfate. In the presence of the latter, HC-II becomes the predominant thrombin inhibitor in place of antithrombin III (AT). This chain is Heparin cofactor 2 (SERPIND1), found in Oryctolagus cuniculus (Rabbit).